The sequence spans 362 residues: Protein-arginine kinase (362 aa).

A Phosphagen kinase C-terminal domain is found at 24–255 (IVLSSRIRLA…QQLIAQERMA (232 aa)). Residues 27–31 (SSRIR), His92, Arg126, 177–181 (RASVM), and 208–213 (RGTYGE) each bind ATP. The short motif at 338–343 (RDVRRA) is the RDXXRA motif of the pArg binding pocket involved in allosteric regulation element.

It belongs to the ATP:guanido phosphotransferase family.

It catalyses the reaction L-arginyl-[protein] + ATP = N(omega)-phospho-L-arginyl-[protein] + ADP + H(+). Its activity is regulated as follows. Appears to be allosterically activated by the binding of pArg-containing polypeptides to the pArg-binding pocket localized in the C-terminal domain of McsB. Catalyzes the specific phosphorylation of arginine residues in a large number of proteins. Is part of the bacterial stress response system. Protein arginine phosphorylation has a physiologically important role and is involved in the regulation of many critical cellular processes, such as protein homeostasis, motility, competence, and stringent and stress responses, by regulating gene expression and protein activity. This Geobacillus sp. (strain WCH70) protein is Protein-arginine kinase.